The primary structure comprises 100 residues: Large ribosomal subunit protein uL23 (100 aa).

It belongs to the universal ribosomal protein uL23 family. Part of the 50S ribosomal subunit. Contacts protein L29, and trigger factor when it is bound to the ribosome.

One of the early assembly proteins it binds 23S rRNA. One of the proteins that surrounds the polypeptide exit tunnel on the outside of the ribosome. Forms the main docking site for trigger factor binding to the ribosome. The polypeptide is Large ribosomal subunit protein uL23 (Thermotoga maritima (strain ATCC 43589 / DSM 3109 / JCM 10099 / NBRC 100826 / MSB8)).